We begin with the raw amino-acid sequence, 440 residues long: Putative F-box/LRR-repeat protein At5g15620 (440 aa).

The F-box domain occupies Met-1–Phe-52. LRR repeat units follow at residues Phe-4–Ser-31, Leu-126–Ser-153, Phe-156–Arg-181, Ser-194–Arg-205, Pro-210–Asp-235, Tyr-264–Val-289, and Glu-318–Gly-343.

In Arabidopsis thaliana (Mouse-ear cress), this protein is Putative F-box/LRR-repeat protein At5g15620.